Here is a 381-residue protein sequence, read N- to C-terminus: E3 ubiquitin-protein ligase At1g63170 (381 aa).

The segment at 1-23 is disordered; sequence MSRETTTEATPLILTDGGGGRRS. 2 consecutive transmembrane segments (helical) span residues 74–94 and 107–127; these read VVVL…AVLV and VWII…CVEY. The tract at residues 135 to 161 is disordered; sequence RRDLSPRSSSSSSSSSSSMDEEEGLGL. Residues 140-152 show a composition bias toward low complexity; that stretch reads PRSSSSSSSSSSS. Residues 170 to 194 adopt a coiled-coil conformation; the sequence is LELGQLENENNSFAKHLESANTMIS. 3 helical membrane passes run 189 to 209, 224 to 244, and 245 to 265; these read ANTM…SSGG, IVFL…ACVI, and GIAV…VAEQ. The segment at 325 to 366 adopts an RING-type; atypical zinc-finger fold; it reads CCICLSAYEDETELRELPCGHHFHCGCVDKWLYINATCPLCK.

Its subcellular location is the membrane. The catalysed reaction is S-ubiquitinyl-[E2 ubiquitin-conjugating enzyme]-L-cysteine + [acceptor protein]-L-lysine = [E2 ubiquitin-conjugating enzyme]-L-cysteine + N(6)-ubiquitinyl-[acceptor protein]-L-lysine.. It functions in the pathway protein modification; protein ubiquitination. Functionally, mediates E2-dependent protein ubiquitination. This chain is E3 ubiquitin-protein ligase At1g63170, found in Arabidopsis thaliana (Mouse-ear cress).